The chain runs to 367 residues: Succinyl-diaminopimelate desuccinylase (367 aa).

His-64 provides a ligand contact to Zn(2+). Asp-66 is a catalytic residue. Asp-95 serves as a coordination point for Zn(2+). Glu-125 functions as the Proton acceptor in the catalytic mechanism. Zn(2+) is bound by residues Glu-126, Glu-154, and His-339.

The protein belongs to the peptidase M20A family. DapE subfamily. In terms of assembly, homodimer. Zn(2+) is required as a cofactor. Requires Co(2+) as cofactor.

It catalyses the reaction N-succinyl-(2S,6S)-2,6-diaminopimelate + H2O = (2S,6S)-2,6-diaminopimelate + succinate. Its pathway is amino-acid biosynthesis; L-lysine biosynthesis via DAP pathway; LL-2,6-diaminopimelate from (S)-tetrahydrodipicolinate (succinylase route): step 3/3. In terms of biological role, catalyzes the hydrolysis of N-succinyl-L,L-diaminopimelic acid (SDAP), forming succinate and LL-2,6-diaminopimelate (DAP), an intermediate involved in the bacterial biosynthesis of lysine and meso-diaminopimelic acid, an essential component of bacterial cell walls. In Sulfurovum sp. (strain NBC37-1), this protein is Succinyl-diaminopimelate desuccinylase.